We begin with the raw amino-acid sequence, 102 residues long: Putative septation protein SpoVG 2 (102 aa).

This sequence belongs to the SpoVG family.

In terms of biological role, could be involved in septation. In Listeria innocua serovar 6a (strain ATCC BAA-680 / CLIP 11262), this protein is Putative septation protein SpoVG 2.